Reading from the N-terminus, the 323-residue chain is Acetyl-coenzyme A carboxylase carboxyl transferase subunit alpha (323 aa).

One can recognise a CoA carboxyltransferase C-terminal domain in the interval 39-293; the sequence is RLSKKSQQLT…RRALADSLRQ (255 aa).

It belongs to the AccA family. Acetyl-CoA carboxylase is a heterohexamer composed of biotin carboxyl carrier protein (AccB), biotin carboxylase (AccC) and two subunits each of ACCase subunit alpha (AccA) and ACCase subunit beta (AccD).

The protein localises to the cytoplasm. It catalyses the reaction N(6)-carboxybiotinyl-L-lysyl-[protein] + acetyl-CoA = N(6)-biotinyl-L-lysyl-[protein] + malonyl-CoA. It participates in lipid metabolism; malonyl-CoA biosynthesis; malonyl-CoA from acetyl-CoA: step 1/1. Functionally, component of the acetyl coenzyme A carboxylase (ACC) complex. First, biotin carboxylase catalyzes the carboxylation of biotin on its carrier protein (BCCP) and then the CO(2) group is transferred by the carboxyltransferase to acetyl-CoA to form malonyl-CoA. The protein is Acetyl-coenzyme A carboxylase carboxyl transferase subunit alpha of Paraburkholderia phytofirmans (strain DSM 17436 / LMG 22146 / PsJN) (Burkholderia phytofirmans).